The chain runs to 262 residues: Tetrahydromethanopterin S-methyltransferase subunit C (262 aa).

6 consecutive transmembrane segments (helical) span residues 35 to 57 (FVPS…AGAN), 70 to 92 (GVPS…GVLI), 97 to 119 (GLPV…FIVG), 140 to 162 (LSLM…FSAD), 172 to 194 (GVIA…ACIG), and 214 to 236 (WLIF…FWLY).

It belongs to the MtrC family. As to quaternary structure, the complex is composed of 8 subunits; MtrA, MtrB, MtrC, MtrD, MtrE, MtrF, MtrG and MtrH.

The protein localises to the cell membrane. It carries out the reaction 5-methyl-5,6,7,8-tetrahydromethanopterin + coenzyme M + 2 Na(+)(in) = 5,6,7,8-tetrahydromethanopterin + methyl-coenzyme M + 2 Na(+)(out). It functions in the pathway one-carbon metabolism; methanogenesis from CO(2); methyl-coenzyme M from 5,10-methylene-5,6,7,8-tetrahydromethanopterin: step 2/2. Part of a complex that catalyzes the formation of methyl-coenzyme M and tetrahydromethanopterin from coenzyme M and methyl-tetrahydromethanopterin. This is an energy-conserving, sodium-ion translocating step. This is Tetrahydromethanopterin S-methyltransferase subunit C from Methanococcus maripaludis (strain DSM 14266 / JCM 13030 / NBRC 101832 / S2 / LL).